The following is a 457-amino-acid chain: MADPAIKLFGKTIPLPELGVVDSSSSYTGFLTETQIPVRLSDSCTGDDDDEEMGDSGLGREEGDDVGDGGGESETDKKEEKDSECQEESLRNESNDVTTTTSGITEKTETTKAAKTNEESGGTACSQEGKLKKPDKILPCPRCNSMETKFCYYNNYNVNQPRHFCKKCQRYWTAGGTMRNVPVGAGRRKNKSPASHYNRHVSITSAEAMQKVARTDLQHPNGANLLTFGSDSVLCESMASGLNLVEKSLLKTQTVLQEPNEGLKITVPLNQTNEEAGTVSPLPKVPCFPGPPPTWPYAWNGVSWTILPFYPPPAYWSCPGVSPGAWNSFTWMPQPNSPSGSNPNSPTLGKHSRDENAAEPGTAFDETESLGREKSKPERCLWVPKTLRIDDPEEAAKSSIWETLGIKKDENADTFGAFRSSTKEKSSLSEGRLPGRRPELQANPAALSRSANFHESS.

The tract at residues 1 to 130 (MADPAIKLFG…GGTACSQEGK (130 aa)) is disordered. A compositionally biased stretch (polar residues) spans 22-35 (DSSSSYTGFLTETQ). Composition is skewed to acidic residues over residues 45 to 54 (TGDDDDEEMG) and 62 to 73 (EGDDVGDGGGES). Composition is skewed to basic and acidic residues over residues 74–94 (ETDK…RNES) and 106–118 (EKTE…KTNE). The Dof-type zinc-finger motif lies at 138-192 (LPCPRCNSMETKFCYYNNYNVNQPRHFCKKCQRYWTAGGTMRNVPVGAGRRKNKS). Positions 140, 143, 165, and 168 each coordinate Zn(2+). Disordered stretches follow at residues 334–377 (QPNS…KSKP) and 417–457 (AFRS…HESS). Residues 337–346 (SPSGSNPNSP) are compositionally biased toward low complexity.

In terms of assembly, interacts with ADO2 (via kelch repeats) and ADO3 (via kelch repeats). As to expression, expressed in the vasculature of cotyledons and hypocotyls, leaves and roots.

It localises to the nucleus. Its function is as follows. Transcription factor that binds specifically to a 5'-AA[AG]G-3' consensus core sequence. Regulates a photoperiodic flowering response. Transcriptional repressor of 'CONSTANS' expression. The stability of CDF2 is controlled by 'GIGANTEA' and redundantly by ADO3, ADO2 and/or ADO1. The protein is Cyclic dof factor 2 (CDF2) of Arabidopsis thaliana (Mouse-ear cress).